The sequence spans 163 residues: 5-hydroxymethyl-dUMP N-hydrolase (163 aa).

Residue Ala-2 is modified to N-acetylalanine. Residue Gly-16 participates in 5-hydroxymethyl-dUMP binding. Ser-17 is modified (phosphoserine). Positions 18, 19, 20, 87, 89, and 93 each coordinate 5-hydroxymethyl-dUMP. Position 87 is a phosphoserine (Ser-87). Phosphoserine occurs at positions 112, 117, 127, and 158. Ser-117 lines the 5-hydroxymethyl-dUMP pocket.

As to quaternary structure, monomer and homodimer. In terms of tissue distribution, highly expressed in heart, kidney, liver and spleen. Weakly expressed in lung and skeletal muscle.

It localises to the cytoplasm. It is found in the nucleus. The catalysed reaction is 5-hydroxymethyl-dUMP + H2O = 5-hydroxymethyluracil + 2-deoxy-D-ribose 5-phosphate. Part of a nucleotide salvage pathway that eliminates epigenetically modified 5-hydroxymethyl-dCMP (hmdCMP) in a two-step process entailing deamination to cytotoxic 5-hydroxymethyl-dUMP (hmdUMP), followed by its hydrolysis into 5-hydroxymethyluracil (hmU) and 2-deoxy-D-ribose 5-phosphate (deoxyribosephosphate). Catalyzes the second step in that pathway, the hydrolysis of the N-glycosidic bond in hmdUMP, degrading this cytotoxic nucleotide to avoid its genomic integration. This chain is 5-hydroxymethyl-dUMP N-hydrolase, found in Rattus norvegicus (Rat).